The sequence spans 320 residues: Putative thiosulfate sulfurtransferase (320 aa).

A signal peptide spans 1–37 (MSVRSLRWPRQKAFLAVISLVVAVLLAVPGWLTPATA). Rhodanese domains lie at 56 to 166 (NNKQ…PVTK) and 194 to 315 (LTGK…PVET). C274 functions as the Cysteine persulfide intermediate in the catalytic mechanism.

It is found in the periplasm. The enzyme catalyses thiosulfate + hydrogen cyanide = thiocyanate + sulfite + 2 H(+). Functionally, may be a sulfotransferase involved in the transport of sulfate. Displays very low rhodanese activity. The polypeptide is Putative thiosulfate sulfurtransferase (rhdA) (Synechococcus elongatus (strain ATCC 33912 / PCC 7942 / FACHB-805) (Anacystis nidulans R2)).